The sequence spans 102 residues: Protein translation factor SUI1 homolog (102 aa).

This sequence belongs to the SUI1 family.

This chain is Protein translation factor SUI1 homolog, found in Methanococcus vannielii.